A 204-amino-acid chain; its full sequence is Protein FAM167A (204 aa).

The interval 58 to 80 (GLAVSDGSTELEKDAGLKPRATP) is disordered. Residues 113-146 (LRKELMEMRIQDQQLARQLMRLRGDINKLKVEQT) are a coiled coil.

Belongs to the FAM167 (SEC) family.

This Danio rerio (Zebrafish) protein is Protein FAM167A (fam167a).